Reading from the N-terminus, the 282-residue chain is Biotin synthase (282 aa).

Positions 1–230 (MSDNKIYLCA…NQMLMIAGGR (230 aa)) constitute a Radical SAM core domain. Cysteine 19, cysteine 23, and cysteine 26 together coordinate [4Fe-4S] cluster. Residues cysteine 63, cysteine 98, and cysteine 156 each coordinate [2Fe-2S] cluster.

This sequence belongs to the radical SAM superfamily. Biotin synthase family. As to quaternary structure, homodimer. The cofactor is [4Fe-4S] cluster. Requires [2Fe-2S] cluster as cofactor.

It catalyses the reaction (4R,5S)-dethiobiotin + (sulfur carrier)-SH + 2 reduced [2Fe-2S]-[ferredoxin] + 2 S-adenosyl-L-methionine = (sulfur carrier)-H + biotin + 2 5'-deoxyadenosine + 2 L-methionine + 2 oxidized [2Fe-2S]-[ferredoxin]. Its pathway is cofactor biosynthesis; biotin biosynthesis; biotin from 7,8-diaminononanoate: step 2/2. Catalyzes the conversion of dethiobiotin (DTB) to biotin by the insertion of a sulfur atom into dethiobiotin via a radical-based mechanism. The polypeptide is Biotin synthase (Aliarcobacter butzleri (strain RM4018) (Arcobacter butzleri)).